The following is a 605-amino-acid chain: Translation factor GUF1 homolog, chloroplastic (605 aa).

One can recognise a tr-type G domain in the interval 7-189 (RRIRNFSIIA…RIVQVVPPPR (183 aa)). GTP is bound by residues 16–23 (AHIDHGKS), 82–86 (DTPGH), and 136–139 (NKID).

This sequence belongs to the TRAFAC class translation factor GTPase superfamily. Classic translation factor GTPase family. LepA subfamily.

It localises to the plastid. Its subcellular location is the chloroplast. It carries out the reaction GTP + H2O = GDP + phosphate + H(+). Functionally, promotes chloroplast protein synthesis. May act as a fidelity factor of the translation reaction, by catalyzing a one-codon backward translocation of tRNAs on improperly translocated ribosomes. The chain is Translation factor GUF1 homolog, chloroplastic from Ostreococcus lucimarinus (strain CCE9901).